We begin with the raw amino-acid sequence, 185 residues long: Ribosome-recycling factor (185 aa).

This sequence belongs to the RRF family.

It localises to the cytoplasm. Functionally, responsible for the release of ribosomes from messenger RNA at the termination of protein biosynthesis. May increase the efficiency of translation by recycling ribosomes from one round of translation to another. The protein is Ribosome-recycling factor of Wolbachia pipientis wMel.